Reading from the N-terminus, the 304-residue chain is MNIVFSRDSQVRVMENTVANTEKYFGQFCSLLAAYTRKTARLRDKADQLVKQLIDFANSENPELRATMRGFAEDLAKVQDYRQAQVERLETKVVNPLKLYGAQIKQTRAEIKKFKHVQNHEIKQLEKLEKLRQKSPSDQQMIGQAETRVQRAAVDSSRTTLQLEETVDGFQRQKLKDLQKFFCDFVTIEMVFHAKAVEVYSSAFQTLEKYDLERDLLDFRAKMQGVYGHYDTRLLANTSPPPSVLQSLASQGTLQVQLSRANEDPEHPHANHGRFSLCEWVVKGQPAHCVCGQGGHLMLPGHSL.

Residues 6-217 (SRDSQVRVME…EKYDLERDLL (212 aa)) form a BAR-like region.

This sequence belongs to the CIBAR family. In terms of assembly, homodimer (via BAR-like domain). Heterodimer (via BAR-like domain) with FAM92A. Interacts with CBY1. As to expression, restricted to certain tissues, most prominently expressed in multicilaited tissues.

It is found in the cytoplasm. Its subcellular location is the cytoskeleton. It localises to the microtubule organizing center. The protein localises to the centrosome. The protein resides in the centriole. It is found in the cilium basal body. In terms of biological role, may play a role in ciliogenesis. In cooperation with CBY1 may facilitate ciliogenesis likely by the recruitment and fusion of endosomal vesicles at distal appendages during early stages of ciliogenesis. The sequence is that of CBY1-interacting BAR domain-containing protein 2 from Homo sapiens (Human).